Here is a 206-residue protein sequence, read N- to C-terminus: Ras-related protein Rab-18 (206 aa).

Met-1 carries the N-acetylmethionine modification. GTP contacts are provided by Ser-17, Gly-20, Lys-21, Ser-22, Ser-23, Asp-34, Pro-35, Thr-40, Gly-66, Lys-123, and Asp-125. A Mg(2+)-binding site is contributed by Ser-22. 2 consecutive short sequence motifs (switch) follow at residues 31–45 and 63–80; these read DTFD…GVDF and DTAG…YYRG. Thr-40 serves as a coordination point for Mg(2+). Ser-144 bears the Phosphoserine mark. Ala-152 contributes to the GTP binding site. A lipid anchor (S-palmitoyl cysteine) is attached at Cys-199. The residue at position 203 (Cys-203) is a Cysteine methyl ester. The S-geranylgeranyl cysteine moiety is linked to residue Cys-203. Residues 204-206 constitute a propeptide, removed in mature form; the sequence is SVL.

Belongs to the small GTPase superfamily. Rab family. In terms of assembly, interacts (in GTP-bound form) with ZFYVE1. Interacts with ZW10 and this interaction is enhanced in the presence of ZFYVE1. Interacts with BSCL2. It depends on Mg(2+) as a cofactor.

It localises to the endoplasmic reticulum membrane. The protein localises to the golgi apparatus. Its subcellular location is the cis-Golgi network membrane. The protein resides in the lipid droplet. It is found in the apical cell membrane. It carries out the reaction GTP + H2O = GDP + phosphate + H(+). With respect to regulation, regulated by guanine nucleotide exchange factors (GEFs) which promote the exchange of bound GDP for free GTP. Regulated by GTPase activating proteins (GAPs) which increase the GTP hydrolysis activity at the ER membrane. Inhibited by GDP dissociation inhibitors (GDIs) which prevent Rab-GDP dissociation. In terms of biological role, the small GTPases Rab are key regulators of intracellular membrane trafficking, from the formation of transport vesicles to their fusion with membranes. Rabs cycle between an inactive GDP-bound form and an active GTP-bound form that is able to recruit to membranes different sets of downstream effectors directly responsible for vesicle formation, movement, tethering and fusion. RAB18 is required for the localization of ZFYVE1 to lipid droplets and for its function in mediating the formation of endoplasmic reticulum-lipid droplets (ER-LD) contacts. Also required for maintaining endoplasmic reticulum structure. Plays a role in apical endocytosis/recycling. Plays a key role in eye and brain development and neurodegeneration. The polypeptide is Ras-related protein Rab-18 (RAB18) (Bos taurus (Bovine)).